Here is a 415-residue protein sequence, read N- to C-terminus: Gamma-glutamyl phosphate reductase (415 aa).

Belongs to the gamma-glutamyl phosphate reductase family.

Its subcellular location is the cytoplasm. The catalysed reaction is L-glutamate 5-semialdehyde + phosphate + NADP(+) = L-glutamyl 5-phosphate + NADPH + H(+). It functions in the pathway amino-acid biosynthesis; L-proline biosynthesis; L-glutamate 5-semialdehyde from L-glutamate: step 2/2. Its function is as follows. Catalyzes the NADPH-dependent reduction of L-glutamate 5-phosphate into L-glutamate 5-semialdehyde and phosphate. The product spontaneously undergoes cyclization to form 1-pyrroline-5-carboxylate. This Dictyoglomus turgidum (strain DSM 6724 / Z-1310) protein is Gamma-glutamyl phosphate reductase.